We begin with the raw amino-acid sequence, 66 residues long: Antitoxin RelB2 (66 aa).

In terms of biological role, antitoxin component of a type II toxin-antitoxin (TA) system. Neutralizes the effect of cognate toxin RelE2, but no other RelE or ParE toxin. The sequence is that of Antitoxin RelB2 (relB2) from Caulobacter vibrioides (strain ATCC 19089 / CIP 103742 / CB 15) (Caulobacter crescentus).